The chain runs to 371 residues: Glycosyltransferase 8 domain-containing protein 1 (371 aa).

The Cytoplasmic segment spans residues 1–7; that stretch reads MSFRKVN. A helical; Signal-anchor for type II membrane protein transmembrane segment spans residues 8 to 28; sequence IVILVLAVALFLLVLHHNFLG. The Lumenal portion of the chain corresponds to 29 to 371; sequence LSSLLRNEVS…RRHVEISNTK (343 aa). Residues Asn-103 and Asn-257 are each glycosylated (N-linked (GlcNAc...) asparagine).

The protein belongs to the glycosyltransferase 8 family.

It localises to the membrane. This chain is Glycosyltransferase 8 domain-containing protein 1 (GLT8D1), found in Bos taurus (Bovine).